An 88-amino-acid polypeptide reads, in one-letter code: Putative regulatory protein Npun_R3866 (88 aa).

Belongs to the RemA family.

This is Putative regulatory protein Npun_R3866 from Nostoc punctiforme (strain ATCC 29133 / PCC 73102).